The primary structure comprises 109 residues: Nucleoid-associated protein LBUL_1514 (109 aa).

The protein belongs to the YbaB/EbfC family. Homodimer.

The protein resides in the cytoplasm. It localises to the nucleoid. Binds to DNA and alters its conformation. May be involved in regulation of gene expression, nucleoid organization and DNA protection. This is Nucleoid-associated protein LBUL_1514 from Lactobacillus delbrueckii subsp. bulgaricus (strain ATCC BAA-365 / Lb-18).